Reading from the N-terminus, the 134-residue chain is Transcription antitermination protein NusB (134 aa).

This sequence belongs to the NusB family.

Involved in transcription antitermination. Required for transcription of ribosomal RNA (rRNA) genes. Binds specifically to the boxA antiterminator sequence of the ribosomal RNA (rrn) operons. This chain is Transcription antitermination protein NusB, found in Halothermothrix orenii (strain H 168 / OCM 544 / DSM 9562).